Consider the following 719-residue polypeptide: Polyribonucleotide nucleotidyltransferase (719 aa).

The Mg(2+) site is built by aspartate 491 and aspartate 497. The region spanning 558–617 (PRMLTIKINPEKIRDVIGKGGATIRALTEETGTQIDISDDGTIVIASVDETQAKEAQRRI) is the KH domain. The 69-residue stretch at 627-695 (GQIYDGSVLR…DKGRLRLSIK (69 aa)) folds into the S1 motif domain.

It belongs to the polyribonucleotide nucleotidyltransferase family. The cofactor is Mg(2+).

The protein localises to the cytoplasm. It carries out the reaction RNA(n+1) + phosphate = RNA(n) + a ribonucleoside 5'-diphosphate. Involved in mRNA degradation. Catalyzes the phosphorolysis of single-stranded polyribonucleotides processively in the 3'- to 5'-direction. The protein is Polyribonucleotide nucleotidyltransferase of Bordetella parapertussis (strain 12822 / ATCC BAA-587 / NCTC 13253).